The sequence spans 88 residues: Protein MATERNALLY EXPRESSED GENE 2 (88 aa).

The N-terminal stretch at 1 to 27 (MEYRKRVDALVFFSLLLLGYFAAHAHG) is a signal peptide. Cysteine 65 and cysteine 87 are joined by a disulfide.

Belongs to the MEG family. In terms of tissue distribution, expressed exclusively in endosperm.

The chain is Protein MATERNALLY EXPRESSED GENE 2 (MEG2) from Zea mays (Maize).